Here is a 249-residue protein sequence, read N- to C-terminus: uncharacterized protein (249 aa).

It belongs to the ycf73 family.

It is found in the plastid. The protein localises to the chloroplast. This is an uncharacterized protein from Oryza sativa (Rice).